The chain runs to 312 residues: Telomere-binding protein OPG077 (312 aa).

It belongs to the orthopoxvirus OPG077 family.

Its subcellular location is the virion. Functionally, DNA-binding protein which binds to the hairpin form of the viral telomeric sequence. Required for the production of mature virions (MV). In Variola virus (isolate Human/India/Ind3/1967) (VARV), this protein is Telomere-binding protein OPG077 (OPG077).